The sequence spans 591 residues: Phenylalanine--tRNA ligase beta subunit (591 aa).

The 77-residue stretch at 304 to 380 (LSYREMTVTT…VAFGYNNLIT (77 aa)) folds into the B5 domain. Mg(2+)-binding residues include D358, D364, E367, and D368.

The protein belongs to the phenylalanyl-tRNA synthetase beta subunit family. Type 2 subfamily. Tetramer of two alpha and two beta subunits. It depends on Mg(2+) as a cofactor.

Its subcellular location is the cytoplasm. The catalysed reaction is tRNA(Phe) + L-phenylalanine + ATP = L-phenylalanyl-tRNA(Phe) + AMP + diphosphate + H(+). In Caenorhabditis elegans, this protein is Phenylalanine--tRNA ligase beta subunit.